A 242-amino-acid chain; its full sequence is 7-cyano-7-deazaguanine synthase (242 aa).

13-23 (FSGGQDSSVCL) is an ATP binding site. Zn(2+) is bound by residues Cys-201, Cys-216, Cys-219, and Cys-222.

Belongs to the QueC family. Requires Zn(2+) as cofactor.

The catalysed reaction is 7-carboxy-7-deazaguanine + NH4(+) + ATP = 7-cyano-7-deazaguanine + ADP + phosphate + H2O + H(+). Its pathway is purine metabolism; 7-cyano-7-deazaguanine biosynthesis. Functionally, catalyzes the ATP-dependent conversion of 7-carboxy-7-deazaguanine (CDG) to 7-cyano-7-deazaguanine (preQ(0)). The polypeptide is 7-cyano-7-deazaguanine synthase (Caulobacter vibrioides (strain ATCC 19089 / CIP 103742 / CB 15) (Caulobacter crescentus)).